The chain runs to 216 residues: Soluble inorganic pyrophosphatase 4 (216 aa).

Ser-18 bears the Phosphoserine mark. Substrate contacts are provided by Lys-66 and Arg-80. Residue Tyr-88 is the Proton donor of the active site. Tyr-92 lines the substrate pocket. Residues Asp-102, Asp-107, and Asp-139 each contribute to the Mg(2+) site. Tyr-176 is a binding site for substrate.

It belongs to the PPase family. Monomer. Mg(2+) is required as a cofactor. In terms of tissue distribution, ubiquitous, excepted in pollen. Very low expression in cork, xylem and hypocotyls.

It localises to the cytoplasm. The enzyme catalyses diphosphate + H2O = 2 phosphate + H(+). Its activity is regulated as follows. Inhibited by Zn(2+), Ca(2+), Ba(2+), Fe(2+), Co(2+), Cu(2+), Eu(2+), Eu(3+) and Mn(2+). Its function is as follows. Catalyzes the irreversible hydrolysis of pyrophosphate (PPi) to phosphate. The MgPPi(2-) complex binds to the enzyme only after a free Mg(2+) ion has bound. No activity with glycerol-3-phosphate, glucose-6-phosphate, p-nitrophenylphosphate, ADP, NADP(+), NAD(+),NADH, NADPH or phosphoribosyl pyrophosphate as substrates. The chain is Soluble inorganic pyrophosphatase 4 from Arabidopsis thaliana (Mouse-ear cress).